We begin with the raw amino-acid sequence, 72 residues long: Probable transcription factor elt-4 (72 aa).

The GATA-type zinc-finger motif lies at 16–40 (CSNCNGTNTTLWRRKAEGDPVCNAC).

It is found in the nucleus. Probable transcription factor. Plays a role in regulating heme-dependent expression of heme transporter hrg-1. Modulates lifespan in a daf-16-dependent manner. The sequence is that of Probable transcription factor elt-4 from Caenorhabditis elegans.